The primary structure comprises 555 residues: Glutamate--tRNA ligase (555 aa).

A 'HIGH' region motif is present at residues 100–110 (PNPSGPLHIGH).

The protein belongs to the class-I aminoacyl-tRNA synthetase family. Glutamate--tRNA ligase type 2 subfamily.

The protein resides in the cytoplasm. The enzyme catalyses tRNA(Glu) + L-glutamate + ATP = L-glutamyl-tRNA(Glu) + AMP + diphosphate. Its function is as follows. Catalyzes the attachment of glutamate to tRNA(Glu) in a two-step reaction: glutamate is first activated by ATP to form Glu-AMP and then transferred to the acceptor end of tRNA(Glu). The protein is Glutamate--tRNA ligase of Methanococcus maripaludis (strain C5 / ATCC BAA-1333).